Consider the following 1052-residue polypeptide: Germline survival defective-1 (1052 aa).

Residues 1-25 form the signal peptide; that stretch reads MRCLISYLFHSFLIFLKFIRSDVTA. Disordered regions lie at residues 41–320, 478–543, 667–689, 933–965, and 1033–1052; these read LMKS…DPKN, VNGI…QSVP, PSSQ…EEFE, KQTL…NSYA, and SNNT…NSNF. A compositionally biased stretch (low complexity) spans 67 to 145; it reads ATATAAATTQ…SSTSSTSQQT (79 aa). The span at 163 to 172 shows a compositional bias: polar residues; sequence TSNTANSQSG. Basic and acidic residues predominate over residues 178 to 190; the sequence is TNKDRPKEKEKNT. Positions 244 to 279 are enriched in low complexity; it reads NAKSSGFLSNSSLSSAGQISASSAPPVSTTPTAIPI. Residues 305–320 are compositionally biased toward basic and acidic residues; that stretch reads KRDEEPMPYKSTDPKN. A gld-4 binding region spans residues 424-732; that stretch reads QHPPGLPPLL…QIEKNDNLFS (309 aa). Over residues 480–514 the composition is skewed to polar residues; that stretch reads GISNNIPSDRQQLDSKPNTARGSSGNINQSNTTSP. Residues 674-689 show a composition bias toward acidic residues; the sequence is DENDTDSDHESEEEFE. The gld-3 binding stretch occupies residues 892–1052; that stretch reads PIELPVNMQP…SGGGNQNSNF (161 aa). Residues 950–963 are compositionally biased toward low complexity; it reads EGSQQNGGTSSSNS. Positions 1038–1052 are enriched in gly residues; sequence GVNGNSGGGNQNSNF.

As to quaternary structure, isoform C interacts (via C-terminus) with gld-3 isoform A (via C-terminus) in an RNA-independent manner. Isoform C interacts with gld-4. Expressed in the germline (at protein level). In the early embryo is expressed in all cells, then becomes gradually restricted to the germ cell lineage and enriches in P granules (at protein level). In adult hermaphrodites, is expressed in the mitotic region, accumulates during early stages of meiotic prophase I and is slightly less abundant in maturing oocytes (at protein level).

Its subcellular location is the cytoplasm. It localises to the cytoplasmic granule. Its function is as follows. Required maternally for germline survival by forming a maternal complex with gld-3. During hermaphrodite development forms a complex with gld-3 which promotes the sperm/oocyte switch freeing the translational repressor fbf to turn off sperm promoting factors. Required for proper oocyte differentiation and oogenic meiotic arrest. Stimulates the enzymatic activity of gld-4 and together they prevent gld-1 mRNA degradation. The chain is Germline survival defective-1 from Caenorhabditis elegans.